The chain runs to 128 residues: L-ectoine synthase (128 aa).

The protein belongs to the ectoine synthase family.

It catalyses the reaction (2S)-4-acetamido-2-aminobutanoate = L-ectoine + H2O. It participates in amine and polyamine biosynthesis; ectoine biosynthesis; L-ectoine from L-aspartate 4-semialdehyde: step 3/3. Functionally, catalyzes the circularization of gamma-N-acetyl-alpha,gamma-diaminobutyric acid (ADABA) to ectoine (1,4,5,6-tetrahydro-2-methyl-4-pyrimidine carboxylic acid), which is an excellent osmoprotectant. The sequence is that of L-ectoine synthase from Vibrio parahaemolyticus serotype O3:K6 (strain RIMD 2210633).